We begin with the raw amino-acid sequence, 72 residues long: Translation initiation factor IF-1 (72 aa).

The S1-like domain maps to M1–R72.

Belongs to the IF-1 family. Component of the 30S ribosomal translation pre-initiation complex which assembles on the 30S ribosome in the order IF-2 and IF-3, IF-1 and N-formylmethionyl-tRNA(fMet); mRNA recruitment can occur at any time during PIC assembly.

The protein localises to the cytoplasm. In terms of biological role, one of the essential components for the initiation of protein synthesis. Stabilizes the binding of IF-2 and IF-3 on the 30S subunit to which N-formylmethionyl-tRNA(fMet) subsequently binds. Helps modulate mRNA selection, yielding the 30S pre-initiation complex (PIC). Upon addition of the 50S ribosomal subunit IF-1, IF-2 and IF-3 are released leaving the mature 70S translation initiation complex. The chain is Translation initiation factor IF-1 from Psychromonas ingrahamii (strain DSM 17664 / CCUG 51855 / 37).